Consider the following 273-residue polypeptide: Glutamate racemase (273 aa).

Substrate is bound by residues 10–11 (DS) and 42–43 (YG). The active-site Proton donor/acceptor is the C73. Position 74–75 (74–75 (NT)) interacts with substrate. The Proton donor/acceptor role is filled by C184. 185-186 (TH) is a substrate binding site.

The protein belongs to the aspartate/glutamate racemases family.

The enzyme catalyses L-glutamate = D-glutamate. The protein operates within cell wall biogenesis; peptidoglycan biosynthesis. Its function is as follows. Provides the (R)-glutamate required for cell wall biosynthesis. This chain is Glutamate racemase, found in Desulforudis audaxviator (strain MP104C).